A 175-amino-acid chain; its full sequence is ATP-dependent protease subunit HslV (175 aa).

Residue threonine 2 is part of the active site. Na(+) is bound by residues glycine 158, cysteine 161, and threonine 164.

The protein belongs to the peptidase T1B family. HslV subfamily. In terms of assembly, a double ring-shaped homohexamer of HslV is capped on each side by a ring-shaped HslU homohexamer. The assembly of the HslU/HslV complex is dependent on binding of ATP.

Its subcellular location is the cytoplasm. The enzyme catalyses ATP-dependent cleavage of peptide bonds with broad specificity.. Allosterically activated by HslU binding. Its function is as follows. Protease subunit of a proteasome-like degradation complex believed to be a general protein degrading machinery. The protein is ATP-dependent protease subunit HslV of Haemophilus influenzae (strain PittEE).